A 902-amino-acid chain; its full sequence is Translation initiation factor IF-2 (902 aa).

Over residues 137 to 177 (NLDEQQRLAESDRARDEAIQRKRDEEQAAKDRVEAERKAAE) the composition is skewed to basic and acidic residues. Disordered stretches follow at residues 137-248 (NLDE…SHVM) and 266-314 (HLSA…ERPT). 2 stretches are compositionally biased toward low complexity: residues 178 to 229 (EAAA…ATPA) and 279 to 291 (RGKPTGRPGSSSS). One can recognise a tr-type G domain in the interval 401–570 (SRPPVVTIMG…SLQAEVLELK (170 aa)). Residues 410-417 (GHVDHGKT) form a G1 region. GTP is bound at residue 410 to 417 (GHVDHGKT). Positions 435-439 (GITQH) are G2. A G3 region spans residues 456–459 (DTPG). GTP-binding positions include 456-460 (DTPGH) and 510-513 (NKID). Residues 510-513 (NKID) are G4. The G5 stretch occupies residues 546–548 (SAK).

It belongs to the TRAFAC class translation factor GTPase superfamily. Classic translation factor GTPase family. IF-2 subfamily.

It is found in the cytoplasm. Its function is as follows. One of the essential components for the initiation of protein synthesis. Protects formylmethionyl-tRNA from spontaneous hydrolysis and promotes its binding to the 30S ribosomal subunits. Also involved in the hydrolysis of GTP during the formation of the 70S ribosomal complex. The protein is Translation initiation factor IF-2 of Xanthomonas campestris pv. campestris (strain 8004).